Consider the following 128-residue polypeptide: Glycine cleavage system H protein (128 aa).

The region spanning valine 23–glutamine 105 is the Lipoyl-binding domain. Lysine 64 carries the N6-lipoyllysine modification.

The protein belongs to the GcvH family. The glycine cleavage system is composed of four proteins: P, T, L and H. It depends on (R)-lipoate as a cofactor.

The glycine cleavage system catalyzes the degradation of glycine. The H protein shuttles the methylamine group of glycine from the P protein to the T protein. The protein is Glycine cleavage system H protein of Alcanivorax borkumensis (strain ATCC 700651 / DSM 11573 / NCIMB 13689 / SK2).